We begin with the raw amino-acid sequence, 105 residues long: Defensin-like protein (105 aa).

The first 25 residues, 1 to 25 (MARSLCFMAFAILAMMLFVAYEVQA), serve as a signal peptide directing secretion. Intrachain disulfides connect Cys-28–Cys-72, Cys-39–Cys-59, Cys-45–Cys-66, and Cys-49–Cys-68.

Belongs to the DEFL family. As to expression, flower. Found in petals, stamen and pistils, but not in sepals. In particular, accumulation in a configuration surrounding the inner reproductive whorls.

The protein localises to the secreted. It localises to the cell wall. It is found in the vacuole. Involved in floral organogenesis. May play a protective role in flowers by protecting the reproductive organs from potential pathogen attack. The chain is Defensin-like protein (FST) from Nicotiana tabacum (Common tobacco).